The sequence spans 108 residues: UPF0060 membrane protein Msil_1658 (108 aa).

Helical transmembrane passes span 5–25 (LVYV…WAWL), 31–51 (SLWL…LTLI), 62–82 (AYGG…EGVW), and 88–108 (LGGA…PRPA).

It belongs to the UPF0060 family.

The protein localises to the cell inner membrane. The chain is UPF0060 membrane protein Msil_1658 from Methylocella silvestris (strain DSM 15510 / CIP 108128 / LMG 27833 / NCIMB 13906 / BL2).